A 363-amino-acid polypeptide reads, in one-letter code: Putative F-box protein At4g22170 (363 aa).

The 52-residue stretch at 7–58 (PNSWSDLPHDLLNLVFERLSFANFNRARSVCSSWYSASRQSVPKNQIHWLIL) folds into the F-box domain.

The protein is Putative F-box protein At4g22170 of Arabidopsis thaliana (Mouse-ear cress).